Here is a 636-residue protein sequence, read N- to C-terminus: Nucleolin 2 (636 aa).

Disordered stretches follow at residues 1 to 386 (MGKS…SKTL), 458 to 481 (ANERGTPRNSNPGRKGEGSQSRTI), and 544 to 636 (SEIG…NDEE). Composition is skewed to basic and acidic residues over residues 43-63 (KELIDVVQKEKAEKTVPKKVE) and 76-89 (EKTKETPSKLKDES). Over residues 90–103 (SSEEEDDSSSDEEI) the composition is skewed to acidic residues. Residues 104 to 118 (APAKKRPEPIKKAKV) show a composition bias toward basic and acidic residues. Acidic residues-rich tracts occupy residues 122–133 (SSDDDSTSDEET), 152–163 (SSDDDSSSDEET), and 182–193 (SSDDDSSSDEET). Residues 224 to 238 (TPAKKEPIVVKKDSS) show a composition bias toward basic and acidic residues. Composition is skewed to acidic residues over residues 267–278 (SSEEESSSDDEP), 299–311 (SSEEDSDEEESDD), and 331–341 (SSDESSDESDK). Positions 342–367 (EESKDEKVTPKKKDSDVEMVDAEQKS) are enriched in basic and acidic residues. Polar residues predominate over residues 368 to 383 (NAKQPKTPTNQTQGGS). RRM domains lie at 384 to 460 (KTLF…LANE) and 479 to 558 (RTIY…ESRP). Residues 464–481 (PRNSNPGRKGEGSQSRTI) are compositionally biased toward polar residues. Composition is skewed to basic and acidic residues over residues 552–566 (HVEESRPRDSDEGRS) and 579–604 (RHSDRAPRGGRFSDRAPRGRHSDRGA). The span at 622–636 (MESSKGTKTVFNDEE) shows a compositional bias: polar residues.

In terms of assembly, interacts with THAL in the nucleus. Expressed at low levels in flower buds.

It is found in the nucleus. The protein localises to the nucleolus. Involved in pre-rRNA processing and ribosome assembly. The chain is Nucleolin 2 from Arabidopsis thaliana (Mouse-ear cress).